The sequence spans 239 residues: Ribonuclease 3 (239 aa).

The 126-residue stretch at 12–137 (RAKLESLIGH…LIAAIYLDGG (126 aa)) folds into the RNase III domain. Glu-50 is a binding site for Mg(2+). Asp-54 is a catalytic residue. Asp-123 and Glu-126 together coordinate Mg(2+). The active site involves Glu-126. One can recognise a DRBM domain in the interval 162–231 (DAKTELQEWS…ATKMLEREGI (70 aa)).

It belongs to the ribonuclease III family. Homodimer. It depends on Mg(2+) as a cofactor.

The protein resides in the cytoplasm. It catalyses the reaction Endonucleolytic cleavage to 5'-phosphomonoester.. Functionally, digests double-stranded RNA. Involved in the processing of primary rRNA transcript to yield the immediate precursors to the large and small rRNAs (23S and 16S). Processes some mRNAs, and tRNAs when they are encoded in the rRNA operon. Processes pre-crRNA and tracrRNA of type II CRISPR loci if present in the organism. The chain is Ribonuclease 3 from Rhizobium etli (strain CIAT 652).